The sequence spans 368 residues: F-box/kelch-repeat protein At5g51250 (368 aa).

An F-box domain is found at 1 to 44 (MSSLPDDLLLSIFARISRLYYPTLSLVSKSFRSLLASPDLYKAR). 3 Kelch repeats span residues 116-163 (DIYN…VLDR), 165-218 (IYVA…CIDG), and 260-304 (LFYI…YGGK).

The chain is F-box/kelch-repeat protein At5g51250 from Arabidopsis thaliana (Mouse-ear cress).